A 997-amino-acid chain; its full sequence is MDYNVKDFGALGDGVSDDTAAIQAAIDAAYAAGGGTVYLPAGEYRVSGGEEPSDGCLTIKSNVYIVGAGMGETVIKLVDGWDQDVTGIVRSAYGEETSNFGMSDLTLDGNRDNTSGKVDGWFNGYIPGEDGADRDVTLERVEIREMSGYGFDPHEQTINLTIRDSVAHDNGLDGFVADFQIGGVFENNVSYNNDRHGFNIVTSTNDFVLSNNVAYGNGGAGLVIQRGSYDVAHPYGILIDGGAYYDNGLEGVQIKMAHDVTLQNAEIYGNGLYGVRVYGAEDVQILDNYIHDNSQSGSYAEILLQSYDDTAGVSGNFYTTTGTWIEGNTIVGSANSTYGIQERADGTDYSSLYANSVSNVQSGSVRLYGTNSVVSDLPGTGQQATLEGTTGNDTLTGSEAHETLLGLDGNDRLNGGAGNDILDGGAGRDNLTGGAGADLFRVSARTDSYRTDSASFNDLITDFDPAQDRIDLSALGFTGLGDGYNGTLAVVLNSAGTRTYLKSYEADAEGRRFEIALDGNFAGLLDDGNLIFERPVIEGDAGNNALLGTSAAETLLGHAGNDTLDGAGGDDILVGGAGRDTLTGGAGADLFRFDALSDSQRNYTTGDNQGDRIVDFSVGEDKLDVSALGFTGLGDGYNGTLAVVVNSAGDRTYVKSYETDADGYRFEFSLEGNYQDLGSESFVFATPSGQQLLEGSAGNDSLQGTAADEIVHGGAGRDTLSGGAGADVFRFSELTDSYRTASTSFADLITDFDLADDRIDLSGLGFSGLGDGYDGTLAVVVNSTGTRTYLKSYEANAAGERFEIALDGDLSAFTGANLILDERVVLEGSDGNDTLDGGSAAEELLGGAGNDSLDGGAGNDILDGGAGRDTLSGGSGSDIFRYDDALDSFRNYGTGVTGTDTITDFTPGEDLIDLSALGYTGLGDGYNGTLAVVLNGDGTRTYLKDRESDAEGNQFEIALDGDLVDRLDAGDFIFAEAAATTAIEVVGGTPTEEQLVA.

7 PbH1 repeats span residues 133 to 155 (DRDV…DPHE), 157 to 179 (TINL…VADF), 180 to 202 (QIGG…NIVT), 204 to 226 (TNDF…VIQR), 257 to 279 (AHDV…RVYG), 280 to 315 (AEDV…GVSG), and 320 to 359 (TTGT…SVSN). Hemolysin-type calcium-binding repeat units lie at residues 388–403 (GTTG…AHET), 406–422 (GLDG…NDIL), 424–439 (GGAG…GADL), 557–573 (GHAG…DDIL), 574–590 (VGGA…GADL), 695–709 (GSAG…AADE), 712–729 (HGGA…ADVF), 828–839 (GSDGNDTLDGGS), 846–862 (GGAG…NDIL), and 864–880 (GGAG…SDIF).

The protein belongs to the D-mannuronate C5-epimerase family. Ca(2+) is required as a cofactor.

It localises to the secreted. The enzyme catalyses [(1-&gt;4)-beta-D-mannuronosyl](n) = [alginate](n). The protein operates within glycan biosynthesis; alginate biosynthesis. Inhibited by zinc. Converts beta-D-mannuronic acid (M) to alpha-L-guluronic acid (G), producing a polymer with gel-forming capacity, required for the formation of the cyst coat. This Azotobacter vinelandii protein is Mannuronan C5-epimerase AlgE5.